Here is a 427-residue protein sequence, read N- to C-terminus: tRNA(Ile)-lysidine synthase (427 aa).

S27 to S32 lines the ATP pocket.

Belongs to the tRNA(Ile)-lysidine synthase family.

Its subcellular location is the cytoplasm. The enzyme catalyses cytidine(34) in tRNA(Ile2) + L-lysine + ATP = lysidine(34) in tRNA(Ile2) + AMP + diphosphate + H(+). Functionally, ligates lysine onto the cytidine present at position 34 of the AUA codon-specific tRNA(Ile) that contains the anticodon CAU, in an ATP-dependent manner. Cytidine is converted to lysidine, thus changing the amino acid specificity of the tRNA from methionine to isoleucine. The sequence is that of tRNA(Ile)-lysidine synthase from Streptococcus equi subsp. equi (strain 4047).